The primary structure comprises 70 residues: MMNKDEAGGNWKQFKGKMKEQWGKLTDDDMTVIEGKRDQLVGKIQERYGYQKDQAEKEVVDWETRNNYRW.

It belongs to the UPF0337 (CsbD) family.

This is UPF0337 protein YjbJ (yjbJ) from Salmonella typhi.